A 473-amino-acid polypeptide reads, in one-letter code: Major myo-inositol transporter IolT (473 aa).

12 helical membrane-spanning segments follow: residues 14–34, 49–69, 83–103, 111–131, 146–166, 172–192, 256–276, 295–315, 325–345, 350–370, 389–409, and 411–431; these read IILVSTFGGLLFGYDTGVLNG, AFTEGLVTSSLLFGAALGAVF, ILFLAVIFFISTIGCTFAPNV, FVLGIAVGGASVTVPAYLAEM, LMIVSGQLLAFVFNAILGTTM, VWRFMLVIASLPALFLFFGMI, IVFIGLGIAIVQQITGVNSIM, IGNIANGVISVLATFVGIWLL, MTGLIGTTTALLLIGIFSLVL, ALPYVVLSLTVTFLAFQQGAI, LGMGVTVFCLWMVNFAVSFTF, and ILLAAIGLSTTFFIFVGLGIC.

Belongs to the major facilitator superfamily. Sugar transporter (TC 2.A.1.1) family.

It is found in the cell membrane. It participates in polyol metabolism; myo-inositol degradation into acetyl-CoA. Its function is as follows. Major myo-inositol uptake transporter. In Bacillus subtilis (strain 168), this protein is Major myo-inositol transporter IolT (iolT).